Here is a 296-residue protein sequence, read N- to C-terminus: Transcription factor Pur-alpha 1 (296 aa).

The residue at position 1 (methionine 1) is an N-acetylmethionine. Disordered stretches follow at residues 1-25 (MEANSGGGGGAEGGRAVTGGGGGGG) and 186-214 (IPGHGSQQPSSSEHNVDRTIDSPGQEETG). The residue at position 207 (serine 207) is a Phosphoserine.

The protein belongs to the PUR DNA-binding protein family. As to quaternary structure, homodimer. Interacts with TCP20.

The protein localises to the nucleus. Its function is as follows. Transcription factor that specifically binds the purine-rich double-stranded telomeric repeated sequence 5'-AAACCCTAA-3' found in promoter telo boxes. The polypeptide is Transcription factor Pur-alpha 1 (PURA1) (Arabidopsis thaliana (Mouse-ear cress)).